A 42-amino-acid polypeptide reads, in one-letter code: Packaging protein P20 (42 aa).

A helical transmembrane segment spans residues 11 to 31 (INWLIVILMLTIAGMAATLVC).

As to quaternary structure, heterodimer of P20 and P22; further multimerizes as hexamers of heterodimers. Part of the dodecameric portal complex that is composed of the packaging efficiency factor P6, the DNA packaging ATPase P9, and the internal heterododecamer P20/P22 which spans the virion inner membrane.

It localises to the virion membrane. Its function is as follows. Together with P22, forms the internal part of the portal complex embeded in the virion internal membrane and which plays critical roles in genome packaging and genome ejection. Both proteins multimerize as a single ring-shaped heterdodecamer arranged around a central channel and interact with the P6/P9 external part of the portal. The protein is Packaging protein P20 (XX) of Acinetobacter calcoaceticus (Arthrobacter siderocapsulatus).